We begin with the raw amino-acid sequence, 147 residues long: Heavy metal-dependent transcription regulator 1 (147 aa).

One can recognise an HTH merR-type domain in the interval 1–70 (MNIGQASKVV…VEQIKDLLAL (70 aa)). Positions 3 to 22 (IGQASKVVSGVSSKMIRYYE) form a DNA-binding region, H-T-H motif.

Its subcellular location is the cytoplasm. Transcriptional regulator involved in acid tolerance. Binds copper. This chain is Heavy metal-dependent transcription regulator 1 (hmrR1), found in Rhizobium meliloti (strain 1021) (Ensifer meliloti).